Consider the following 407-residue polypeptide: Na(+)-translocating NADH-quinone reductase subunit F (407 aa).

Residues 3–23 (IILGVVMFTLIVLALTVMILF) form a helical membrane-spanning segment. Residues 32–126 (GDITVEINED…NLKIELPEEI (95 aa)) form the 2Fe-2S ferredoxin-type domain. Residues C69, C75, C78, and C110 each coordinate [2Fe-2S] cluster. The FAD-binding FR-type domain maps to 129–269 (VKKWTCEVIS…SGPFGEFFAK (141 aa)).

The protein belongs to the NqrF family. In terms of assembly, composed of six subunits; NqrA, NqrB, NqrC, NqrD, NqrE and NqrF. It depends on [2Fe-2S] cluster as a cofactor. FAD is required as a cofactor.

Its subcellular location is the cell inner membrane. It catalyses the reaction a ubiquinone + n Na(+)(in) + NADH + H(+) = a ubiquinol + n Na(+)(out) + NAD(+). Its function is as follows. NQR complex catalyzes the reduction of ubiquinone-1 to ubiquinol by two successive reactions, coupled with the transport of Na(+) ions from the cytoplasm to the periplasm. The first step is catalyzed by NqrF, which accepts electrons from NADH and reduces ubiquinone-1 to ubisemiquinone by a one-electron transfer pathway. The sequence is that of Na(+)-translocating NADH-quinone reductase subunit F from Yersinia pseudotuberculosis serotype O:1b (strain IP 31758).